The primary structure comprises 166 residues: NAD(P)H-quinone oxidoreductase subunit I, chloroplastic (166 aa).

4Fe-4S ferredoxin-type domains lie at 55–84 (GRIH…VDWK) and 95–124 (LNYS…MTEE). Cys-64, Cys-67, Cys-70, Cys-74, Cys-104, Cys-107, Cys-110, and Cys-114 together coordinate [4Fe-4S] cluster.

The protein belongs to the complex I 23 kDa subunit family. In terms of assembly, NDH is composed of at least 16 different subunits, 5 of which are encoded in the nucleus. [4Fe-4S] cluster is required as a cofactor.

It is found in the plastid. Its subcellular location is the chloroplast thylakoid membrane. It catalyses the reaction a plastoquinone + NADH + (n+1) H(+)(in) = a plastoquinol + NAD(+) + n H(+)(out). The catalysed reaction is a plastoquinone + NADPH + (n+1) H(+)(in) = a plastoquinol + NADP(+) + n H(+)(out). NDH shuttles electrons from NAD(P)H:plastoquinone, via FMN and iron-sulfur (Fe-S) centers, to quinones in the photosynthetic chain and possibly in a chloroplast respiratory chain. The immediate electron acceptor for the enzyme in this species is believed to be plastoquinone. Couples the redox reaction to proton translocation, and thus conserves the redox energy in a proton gradient. The chain is NAD(P)H-quinone oxidoreductase subunit I, chloroplastic from Oblivia mikanioides (Salmea mikanioides).